A 364-amino-acid polypeptide reads, in one-letter code: Ferrochelatase (364 aa).

Residues H210 and E291 each coordinate Fe cation.

Belongs to the ferrochelatase family.

The protein resides in the cytoplasm. It carries out the reaction heme b + 2 H(+) = protoporphyrin IX + Fe(2+). It functions in the pathway porphyrin-containing compound metabolism; protoheme biosynthesis; protoheme from protoporphyrin-IX: step 1/1. Catalyzes the ferrous insertion into protoporphyrin IX. This chain is Ferrochelatase, found in Idiomarina loihiensis (strain ATCC BAA-735 / DSM 15497 / L2-TR).